Reading from the N-terminus, the 758-residue chain is Maturase-like protein 2 (758 aa).

The protein resides in the plastid. It localises to the chloroplast. This is Maturase-like protein 2 (mat2) from Euglena gracilis.